We begin with the raw amino-acid sequence, 314 residues long: Acetyl-coenzyme A carboxylase carboxyl transferase subunit alpha (314 aa).

The CoA carboxyltransferase C-terminal domain maps to 32–289 (EIDMLEASLK…KKMFLKHLNE (258 aa)).

It belongs to the AccA family. As to quaternary structure, acetyl-CoA carboxylase is a heterohexamer composed of biotin carboxyl carrier protein (AccB), biotin carboxylase (AccC) and two subunits each of ACCase subunit alpha (AccA) and ACCase subunit beta (AccD).

The protein resides in the cytoplasm. It catalyses the reaction N(6)-carboxybiotinyl-L-lysyl-[protein] + acetyl-CoA = N(6)-biotinyl-L-lysyl-[protein] + malonyl-CoA. The protein operates within lipid metabolism; malonyl-CoA biosynthesis; malonyl-CoA from acetyl-CoA: step 1/1. Its function is as follows. Component of the acetyl coenzyme A carboxylase (ACC) complex. First, biotin carboxylase catalyzes the carboxylation of biotin on its carrier protein (BCCP) and then the CO(2) group is transferred by the carboxyltransferase to acetyl-CoA to form malonyl-CoA. The sequence is that of Acetyl-coenzyme A carboxylase carboxyl transferase subunit alpha from Staphylococcus epidermidis (strain ATCC 35984 / DSM 28319 / BCRC 17069 / CCUG 31568 / BM 3577 / RP62A).